The primary structure comprises 736 residues: Meiotic expression up-regulated protein 27 (736 aa).

It belongs to the UPF0300 family.

This chain is Meiotic expression up-regulated protein 27 (meu27), found in Schizosaccharomyces pombe (strain 972 / ATCC 24843) (Fission yeast).